Here is a 415-residue protein sequence, read N- to C-terminus: Casein kinase I isoform delta (415 aa).

Positions 9 to 277 (YRLGRKIGSG…YLRQLFRNLF (269 aa)) constitute a Protein kinase domain. ATP contacts are provided by residues 15–23 (IGSGSFGDI) and Lys38. The Proton acceptor role is filled by Asp128. Residues 301-315 (AEDAERERREREERL) show a composition bias toward basic and acidic residues. The disordered stretch occupies residues 301–415 (AEDAERERRE…SSGLPSTVHR (115 aa)). The segment at 317–342 (HTRNPAVRGLPSTASGRLRGTQEVTP) is autoinhibitory. A compositionally biased stretch (low complexity) spans 341–352 (TPSTPLTPTSHT). The span at 380 to 415 (NVSSSDLTSRQDTSRMSTSQIPSRVTSSGLPSTVHR) shows a compositional bias: polar residues.

It belongs to the protein kinase superfamily. In terms of assembly, monomer. Interacts with per1 and per2. Component of the circadian core oscillator. Post-translationally, autophosphorylated on serine and threonine residues. Detected in retina photoreceptor cells.

It localises to the cytoplasm. It is found in the nucleus. It catalyses the reaction L-seryl-[protein] + ATP = O-phospho-L-seryl-[protein] + ADP + H(+). The enzyme catalyses L-threonyl-[protein] + ATP = O-phospho-L-threonyl-[protein] + ADP + H(+). It carries out the reaction L-seryl-[tau protein] + ATP = O-phospho-L-seryl-[tau protein] + ADP + H(+). The catalysed reaction is L-threonyl-[tau protein] + ATP = O-phospho-L-threonyl-[tau protein] + ADP + H(+). With respect to regulation, exhibits substrate-dependent heparin activation. Casein kinases are operationally defined by their preferential utilization of acidic proteins such as caseins as substrates. Can phosphorylate a large number of proteins. Central component of the circadian clock. May act as a negative regulator of circadian rhythmicity by phosphorylating per1 and per2, which may lead to their degradation. Participates in wnt signaling. In terms of biological role, has no kinase activity. This Xenopus laevis (African clawed frog) protein is Casein kinase I isoform delta (csnk1d).